A 489-amino-acid chain; its full sequence is Pluviatolide synthase (489 aa).

The chain crosses the membrane as a helical span at residues 6-26 (SVLGLSSTLIIALAITVIFLL). Cys432 contacts heme.

It belongs to the cytochrome P450 family. Requires heme as cofactor.

The protein resides in the membrane. The catalysed reaction is (-)-matairesinol + reduced [NADPH--hemoprotein reductase] + O2 = (-)-pluviatolide + oxidized [NADPH--hemoprotein reductase] + 2 H2O + H(+). The protein operates within aromatic compound metabolism; phenylpropanoid biosynthesis. Its function is as follows. Cytochrome P450 involved in the biosynthesis of etoposide, a chemotherapeutic compound of the topoisomerase inhibitor family. Catalyzes the conversion of matairesinol to pluviatolide. The sequence is that of Pluviatolide synthase from Podophyllum peltatum (American mandrake).